The chain runs to 363 residues: Dihydroorotate dehydrogenase (quinone) (363 aa).

FMN is bound by residues 67–71 (AGLDK) and Thr91. Position 71 (Lys71) interacts with substrate. 116 to 120 (NRMGF) provides a ligand contact to substrate. FMN contacts are provided by Asn145 and Asn178. Asn178 contacts substrate. The active-site Nucleophile is Ser181. Residue Asn183 coordinates substrate. FMN-binding residues include Lys219 and Thr247. 248-249 (NT) is a substrate binding site. Residues Gly268, Gly297, and 318 to 319 (YT) contribute to the FMN site.

It belongs to the dihydroorotate dehydrogenase family. Type 2 subfamily. Monomer. It depends on FMN as a cofactor.

It is found in the cell membrane. It catalyses the reaction (S)-dihydroorotate + a quinone = orotate + a quinol. It functions in the pathway pyrimidine metabolism; UMP biosynthesis via de novo pathway; orotate from (S)-dihydroorotate (quinone route): step 1/1. Catalyzes the conversion of dihydroorotate to orotate with quinone as electron acceptor. This chain is Dihydroorotate dehydrogenase (quinone), found in Myxococcus xanthus (strain DK1622).